The following is a 342-amino-acid chain: Isopentenyl-diphosphate delta-isomerase (342 aa).

11-12 provides a ligand contact to substrate; the sequence is RK. FMN-binding positions include serine 68, 69–71, serine 99, and asparagine 127; that span reads SMT. 99 to 101 lines the substrate pocket; it reads SMR. A substrate-binding site is contributed by glutamine 162. Position 163 (glutamate 163) interacts with Mg(2+). FMN-binding positions include lysine 194, threonine 224, 274–276, and 295–296; these read GLK and AG.

This sequence belongs to the IPP isomerase type 2 family. Homooctamer. Dimer of tetramers. FMN serves as cofactor. NADPH is required as a cofactor. Requires Mg(2+) as cofactor.

The protein resides in the cytoplasm. The enzyme catalyses isopentenyl diphosphate = dimethylallyl diphosphate. Involved in the biosynthesis of isoprenoids. Catalyzes the 1,3-allylic rearrangement of the homoallylic substrate isopentenyl (IPP) to its allylic isomer, dimethylallyl diphosphate (DMAPP). The protein is Isopentenyl-diphosphate delta-isomerase of Rickettsia peacockii (strain Rustic).